A 160-amino-acid polypeptide reads, in one-letter code: MPSFDVVSEVDTHELTNAIDQANRELATRFDFKGVDAKFERDGDVINQFAPTEFQLKQMNDILRARLAARGIDVLSLEFGDIETNLAQARQKITVKQGIEQKIAKKIAAALKDAKLKVESQINGDKLRVQGKKRDDLQDAIAVLKAGKFELPLQFNNFRD.

3',3'-c-di-GMP contacts are provided by Lys33, Lys132, Arg134, Asp135, and Asp160.

Belongs to the YajQ family.

Cyclic di-GMP effector that significantly contributes to virulence. Binds bis-(3',5')-cyclic diguanylate (cyclic di-GMP or c-di-GMP), an important bacterial second messenger that controls a wide range of cellular processes. The polypeptide is Cyclic di-GMP-binding protein Smlt4090 (Stenotrophomonas maltophilia (strain K279a)).